The sequence spans 300 residues: Acetylglutamate kinase (300 aa).

Substrate-binding positions include 72-73 (GG), R94, and N197.

The protein belongs to the acetylglutamate kinase family. ArgB subfamily.

Its subcellular location is the cytoplasm. The catalysed reaction is N-acetyl-L-glutamate + ATP = N-acetyl-L-glutamyl 5-phosphate + ADP. It participates in amino-acid biosynthesis; L-arginine biosynthesis; N(2)-acetyl-L-ornithine from L-glutamate: step 2/4. In terms of biological role, catalyzes the ATP-dependent phosphorylation of N-acetyl-L-glutamate. This Aromatoleum aromaticum (strain DSM 19018 / LMG 30748 / EbN1) (Azoarcus sp. (strain EbN1)) protein is Acetylglutamate kinase.